The following is a 143-amino-acid chain: Ribosomal RNA large subunit methyltransferase H (143 aa).

2 residues coordinate S-adenosyl-L-methionine: L68 and G95.

It belongs to the RNA methyltransferase RlmH family. Homodimer.

It localises to the cytoplasm. It catalyses the reaction pseudouridine(1915) in 23S rRNA + S-adenosyl-L-methionine = N(3)-methylpseudouridine(1915) in 23S rRNA + S-adenosyl-L-homocysteine + H(+). Its function is as follows. Specifically methylates the pseudouridine at position 1915 (m3Psi1915) in 23S rRNA. The polypeptide is Ribosomal RNA large subunit methyltransferase H (Mycoplasma mobile (strain ATCC 43663 / 163K / NCTC 11711) (Mesomycoplasma mobile)).